A 369-amino-acid chain; its full sequence is Dual-specificity RNA methyltransferase RlmN (369 aa).

The active-site Proton acceptor is glutamate 94. The Radical SAM core domain maps to 113–346 (ESEKWTMCLS…CTIRESRGID (234 aa)). Cysteine 120 and cysteine 351 form a disulfide bridge. Cysteine 127, cysteine 131, and cysteine 134 together coordinate [4Fe-4S] cluster. Residues 177–178 (GE), serine 209, 232–234 (SLH), and asparagine 308 each bind S-adenosyl-L-methionine. Cysteine 351 acts as the S-methylcysteine intermediate in catalysis.

It belongs to the radical SAM superfamily. RlmN family. [4Fe-4S] cluster serves as cofactor.

The protein resides in the cytoplasm. It catalyses the reaction adenosine(2503) in 23S rRNA + 2 reduced [2Fe-2S]-[ferredoxin] + 2 S-adenosyl-L-methionine = 2-methyladenosine(2503) in 23S rRNA + 5'-deoxyadenosine + L-methionine + 2 oxidized [2Fe-2S]-[ferredoxin] + S-adenosyl-L-homocysteine. It carries out the reaction adenosine(37) in tRNA + 2 reduced [2Fe-2S]-[ferredoxin] + 2 S-adenosyl-L-methionine = 2-methyladenosine(37) in tRNA + 5'-deoxyadenosine + L-methionine + 2 oxidized [2Fe-2S]-[ferredoxin] + S-adenosyl-L-homocysteine. Functionally, specifically methylates position 2 of adenine 2503 in 23S rRNA and position 2 of adenine 37 in tRNAs. m2A2503 modification seems to play a crucial role in the proofreading step occurring at the peptidyl transferase center and thus would serve to optimize ribosomal fidelity. This Helicobacter hepaticus (strain ATCC 51449 / 3B1) protein is Dual-specificity RNA methyltransferase RlmN.